Consider the following 319-residue polypeptide: Acetyl-coenzyme A carboxylase carboxyl transferase subunit alpha (319 aa).

Residues 35-296 enclose the CoA carboxyltransferase C-terminal domain; the sequence is NIDEEVHRLR…KAQLLEDLAD (262 aa).

The protein belongs to the AccA family. In terms of assembly, acetyl-CoA carboxylase is a heterohexamer composed of biotin carboxyl carrier protein (AccB), biotin carboxylase (AccC) and two subunits each of ACCase subunit alpha (AccA) and ACCase subunit beta (AccD).

It is found in the cytoplasm. It carries out the reaction N(6)-carboxybiotinyl-L-lysyl-[protein] + acetyl-CoA = N(6)-biotinyl-L-lysyl-[protein] + malonyl-CoA. It participates in lipid metabolism; malonyl-CoA biosynthesis; malonyl-CoA from acetyl-CoA: step 1/1. In terms of biological role, component of the acetyl coenzyme A carboxylase (ACC) complex. First, biotin carboxylase catalyzes the carboxylation of biotin on its carrier protein (BCCP) and then the CO(2) group is transferred by the carboxyltransferase to acetyl-CoA to form malonyl-CoA. In Salmonella agona (strain SL483), this protein is Acetyl-coenzyme A carboxylase carboxyl transferase subunit alpha.